The sequence spans 317 residues: Ornithine carbamoyltransferase (317 aa).

Carbamoyl phosphate-binding positions include 57 to 60 (STRT), Q84, R108, and 135 to 138 (HPCQ). Residues N166, D230, and 234 to 235 (SM) contribute to the L-ornithine site. Carbamoyl phosphate-binding positions include 270-271 (CL) and R298.

This sequence belongs to the aspartate/ornithine carbamoyltransferase superfamily. OTCase family. Homododecamer.

Its subcellular location is the cytoplasm. The enzyme catalyses carbamoyl phosphate + L-ornithine = L-citrulline + phosphate + H(+). It functions in the pathway amino-acid biosynthesis; L-arginine biosynthesis; L-arginine from L-ornithine and carbamoyl phosphate: step 1/3. Reversibly catalyzes the transfer of the carbamoyl group from carbamoyl phosphate (CP) to the N(epsilon) atom of ornithine (ORN) to produce L-citrulline. In Pyrococcus horikoshii (strain ATCC 700860 / DSM 12428 / JCM 9974 / NBRC 100139 / OT-3), this protein is Ornithine carbamoyltransferase.